A 387-amino-acid chain; its full sequence is Large ribosomal subunit protein uL3 (387 aa).

The protein belongs to the universal ribosomal protein uL3 family.

It localises to the cytoplasm. This chain is Large ribosomal subunit protein uL3 (RPL3), found in Kluyveromyces lactis (strain ATCC 8585 / CBS 2359 / DSM 70799 / NBRC 1267 / NRRL Y-1140 / WM37) (Yeast).